Here is a 187-residue protein sequence, read N- to C-terminus: Elongation factor P (187 aa).

Belongs to the elongation factor P family.

Its subcellular location is the cytoplasm. The protein operates within protein biosynthesis; polypeptide chain elongation. Involved in peptide bond synthesis. Stimulates efficient translation and peptide-bond synthesis on native or reconstituted 70S ribosomes in vitro. Probably functions indirectly by altering the affinity of the ribosome for aminoacyl-tRNA, thus increasing their reactivity as acceptors for peptidyl transferase. The polypeptide is Elongation factor P (Parasynechococcus marenigrum (strain WH8102)).